Here is a 109-residue protein sequence, read N- to C-terminus: Cell division protein ZapA (109 aa).

The stretch at 21–97 (PDQRDALNQA…QTIEQALLDQ (77 aa)) forms a coiled coil.

Belongs to the ZapA family. Type 1 subfamily. As to quaternary structure, homodimer. Interacts with FtsZ.

It localises to the cytoplasm. In terms of biological role, activator of cell division through the inhibition of FtsZ GTPase activity, therefore promoting FtsZ assembly into bundles of protofilaments necessary for the formation of the division Z ring. It is recruited early at mid-cell but it is not essential for cell division. The sequence is that of Cell division protein ZapA from Salmonella agona (strain SL483).